The chain runs to 165 residues: MRGLGHEGERDFQIIGGAKPVRVLVRLHRRVLFKLNAPLQLGVTSYCGAMPSCSEKTGSAPNPGSSAPAPAQKKTARCSSLPTHFIFTTPPPPPVSSTLQKGPTGAGCVTAARPAPSSGRQGGGGALYLQFSVRRGSFVSPRAPRAAAQRTCPFSWHRIMSARNV.

The tract at residues 53-123 (CSEKTGSAPN…PAPSSGRQGG (71 aa)) is disordered. A compositionally biased stretch (low complexity) spans 58 to 71 (GSAPNPGSSAPAPA).

This is an uncharacterized protein from Treponema pallidum (strain Nichols).